Here is a 320-residue protein sequence, read N- to C-terminus: MTDTRKSPEPGVKLRAADKVARIPVKIAPTEKPLRKPAWIRARTHGSPEVQRLKRVLREQRLHTVCEEASCPNLGECFGHGTATFMIMGDICTRRCPFCDVAHGRPEPLDAEEPENLARTIAAMGLRYVVITSVDRDDLRDGGARHFVDCIRTTRAHSPDIRIEILVPDFRGRMDVALAILNEAPPDVFNHNLETVPRLYREARPGSDYDWSLDLIQRFKETHPQVPTKSGLMLGLGEEMHEVEAVMRDLRDHGCDMLTLGQYLQPSLHHLPVKRYVTPEEFDRLAEIGYAMGFSQVASGPMVRSSYHADQQAQKVIPEG.

Residues C66, C71, C77, C92, C96, C99, and S306 each coordinate [4Fe-4S] cluster. The Radical SAM core domain maps to 77–295; the sequence is CFGHGTATFM…AEIGYAMGFS (219 aa).

This sequence belongs to the radical SAM superfamily. Lipoyl synthase family. The cofactor is [4Fe-4S] cluster.

It localises to the cytoplasm. The catalysed reaction is [[Fe-S] cluster scaffold protein carrying a second [4Fe-4S](2+) cluster] + N(6)-octanoyl-L-lysyl-[protein] + 2 oxidized [2Fe-2S]-[ferredoxin] + 2 S-adenosyl-L-methionine + 4 H(+) = [[Fe-S] cluster scaffold protein] + N(6)-[(R)-dihydrolipoyl]-L-lysyl-[protein] + 4 Fe(3+) + 2 hydrogen sulfide + 2 5'-deoxyadenosine + 2 L-methionine + 2 reduced [2Fe-2S]-[ferredoxin]. It functions in the pathway protein modification; protein lipoylation via endogenous pathway; protein N(6)-(lipoyl)lysine from octanoyl-[acyl-carrier-protein]: step 2/2. Catalyzes the radical-mediated insertion of two sulfur atoms into the C-6 and C-8 positions of the octanoyl moiety bound to the lipoyl domains of lipoate-dependent enzymes, thereby converting the octanoylated domains into lipoylated derivatives. The sequence is that of Lipoyl synthase from Thioalkalivibrio sulfidiphilus (strain HL-EbGR7).